A 586-amino-acid polypeptide reads, in one-letter code: Phosphomethylpyrimidine synthase (586 aa).

The disordered stretch occupies residues 1-59; that stretch reads MKQSVSAEQIELKSSLPGSKKVYVDGPREGMKVPMREIEQSDTNGVPNPPIRVYDTSGP. Over residues 22 to 39 the composition is skewed to basic and acidic residues; it reads VYVDGPREGMKVPMREIE. Residues Asn193, Met222, Tyr251, His287, 307–309, 348–351, and Glu387 contribute to the substrate site; these read SRG and DGLR. His391 lines the Zn(2+) pocket. Tyr414 serves as a coordination point for substrate. A Zn(2+)-binding site is contributed by His455. [4Fe-4S] cluster contacts are provided by Cys535, Cys538, and Cys543.

Belongs to the ThiC family. [4Fe-4S] cluster serves as cofactor.

The catalysed reaction is 5-amino-1-(5-phospho-beta-D-ribosyl)imidazole + S-adenosyl-L-methionine = 4-amino-2-methyl-5-(phosphooxymethyl)pyrimidine + CO + 5'-deoxyadenosine + formate + L-methionine + 3 H(+). Its pathway is cofactor biosynthesis; thiamine diphosphate biosynthesis. Its function is as follows. Catalyzes the synthesis of the hydroxymethylpyrimidine phosphate (HMP-P) moiety of thiamine from aminoimidazole ribotide (AIR) in a radical S-adenosyl-L-methionine (SAM)-dependent reaction. In Bacillus cereus (strain ZK / E33L), this protein is Phosphomethylpyrimidine synthase.